A 168-amino-acid chain; its full sequence is Photosystem I assembly protein Ycf3 (168 aa).

TPR repeat units follow at residues 35-68 (AFTY…EIDP), 72-105 (SYIL…NPFL), and 120-153 (GEQA…TPGN).

Belongs to the Ycf3 family.

It is found in the plastid. The protein resides in the chloroplast thylakoid membrane. Essential for the assembly of the photosystem I (PSI) complex. May act as a chaperone-like factor to guide the assembly of the PSI subunits. The protein is Photosystem I assembly protein Ycf3 of Illicium oligandrum (Star anise).